Reading from the N-terminus, the 145-residue chain is Globin (145 aa).

Ser-2 bears the N-acetylserine mark. Residues 2–145 (SLSAAEADLV…IVAALKAAGK (144 aa)) form the Globin domain. Residue His-96 coordinates heme b.

This sequence belongs to the globin family. As to quaternary structure, monomer.

The protein is Globin of Aplysia kurodai (Kuroda's sea hare).